A 218-amino-acid chain; its full sequence is Adenylate kinase (218 aa).

10-15 contacts ATP; sequence GAGKGT. The NMP stretch occupies residues 30–59; that stretch reads STGDMLRAAVKAGTPLGIAAKKIMDEGGLV. AMP is bound by residues Thr31, Arg36, 57-59, 85-88, and Gln92; these read GLV and GFPR. Residues 122–159 form an LID region; that stretch reads GRRVHPASGRTYHVKFNPPKVAGRDDVTGEELIQRDDD. Residues Arg123 and 132–133 contribute to the ATP site; that span reads TY. AMP contacts are provided by Arg156 and Arg167. ATP is bound at residue Gly203.

The protein belongs to the adenylate kinase family. As to quaternary structure, monomer.

Its subcellular location is the cytoplasm. It catalyses the reaction AMP + ATP = 2 ADP. It participates in purine metabolism; AMP biosynthesis via salvage pathway; AMP from ADP: step 1/1. In terms of biological role, catalyzes the reversible transfer of the terminal phosphate group between ATP and AMP. Plays an important role in cellular energy homeostasis and in adenine nucleotide metabolism. The sequence is that of Adenylate kinase from Herminiimonas arsenicoxydans.